Here is a 296-residue protein sequence, read N- to C-terminus: Nucleotide-binding protein SPT_1506 (296 aa).

13 to 20 contacts ATP; sequence GMSGAGKT. 63–66 serves as a coordination point for GTP; it reads DMRS.

This sequence belongs to the RapZ-like family.

In terms of biological role, displays ATPase and GTPase activities. The sequence is that of Nucleotide-binding protein SPT_1506 from Streptococcus pneumoniae (strain Taiwan19F-14).